A 265-amino-acid polypeptide reads, in one-letter code: Glutamate racemase (265 aa).

Substrate is bound by residues 7-8 (DS) and 39-40 (YG). The Proton donor/acceptor role is filled by Cys-70. A substrate-binding site is contributed by 71-72 (NT). The active-site Proton donor/acceptor is Cys-182. 183-184 (TH) is a substrate binding site.

Belongs to the aspartate/glutamate racemases family.

The enzyme catalyses L-glutamate = D-glutamate. It functions in the pathway cell wall biogenesis; peptidoglycan biosynthesis. Functionally, provides the (R)-glutamate required for cell wall biosynthesis. This is Glutamate racemase from Lachnospira eligens (strain ATCC 27750 / DSM 3376 / VPI C15-48 / C15-B4) (Eubacterium eligens).